The chain runs to 2892 residues: Inositol 1,4,5-trisphosphate receptor itr-1 (2892 aa).

The Cytoplasmic portion of the chain corresponds to 1–2475 (MNPSYGRVRK…YPLPEHSNSS (2475 aa)). 4 consecutive MIR domains span residues 192 to 246 (GNVI…IEPA), 319 to 379 (QNSV…VQVV), 386 to 466 (GGTA…LGPT), and 490 to 551 (NKEV…LLPV). Residue 357-361 (RMTNR) coordinates 1D-myo-inositol 1,4,5-trisphosphate. 1D-myo-inositol 1,4,5-trisphosphate is bound by residues 625 to 628 (KLLR) and 689 to 691 (YRK). The tract at residues 1030-1056 (MMRGGNKENSKDLAKTPSVTAEEAGRT) is disordered. The segment covering 1034–1043 (GNKENSKDLA) has biased composition (basic and acidic residues). Residues 2476–2496 (ISLGNLYSWFAVFSSFLLAHY) form a helical membrane-spanning segment. Over 2497–2514 (LRHDKIYLHKTSLLILAS) the chain is Extracellular. A helical transmembrane segment spans residues 2515–2535 (LCFLLLSSIGVTLTLYIFGIL). The Cytoplasmic segment spans residues 2536–2572 (QLVNKIVHVVAFVSNKGLEDRPIAEILACRNLHYLLV). A helical membrane pass occupies residues 2573–2593 (YLFICILGLLVHPMIYCILLF). Residues 2594-2615 (DIIFTEETLQNVIASVTRNYQS) are Extracellular-facing. The chain crosses the membrane as a helical span at residues 2616-2636 (IVWTGLLALILLYFFSILGFL). Topologically, residues 2637–2735 (YFRHDFYLEV…FIWRVAYDMT (99 aa)) are cytoplasmic. The segment covering 2655 to 2666 (ATISSGIPSETC) has biased composition (polar residues). The interval 2655–2685 (ATISSGIPSETCPSEGCPGLQPSEKDDNDDE) is disordered. The chain crosses the membrane as a helical span at residues 2736–2756 (FFVVLIVIVLNLIFGVIIDTF). Residues 2757–2892 (GDLRAEKNEK…RAFMEQFQPR (136 aa)) are Extracellular-facing.

The protein belongs to the InsP3 receptor family. In terms of assembly, interacts with myo-1, myo-2, unc-54/myo-4 and nmy-2. Also interacts with iri-1. As to expression, isoform a is expressed in the anterior cells of the pharyngeal terminal bulb, vulva, rectal epithelial cells, spicule protractor muscles of the proctodeum and male-specific neuron CP8 or CP9. Isoform d is expressed in the spermatheca, excretory cell, amphid socket cells, PDA motor neuron, spicule retractor muscles, gubernaculum retractor muscles, posterior oblique muscles, diagonal muscles and the vas deferens. Also expressed in the intestine, pharynx, pharyngeal isthmus, pharyngeal intestinal valve, somatic gonad, hypodermal cells of the vulva, uterine sheath cells, tail, head, LUA motor neuron and the embryonic epidermis (at protein level).

It is found in the endoplasmic reticulum membrane. Functionally, receptor for inositol 1,4,5-trisphosphate, a second messenger that regulates intracellular calcium homeostasis. Binds in vitro to both inositol 1,4,5-trisphosphate (1,4,5-InsP3) and inositol 2,4,5-trisphosphate (2,4,5-InsP3) with high affinity and does not discriminate between the phosphate at 1 or 2 position. Can also bind inositol 1,3,4,5-tetrakisphosphate (1,3,4,5-InsP4) and inositol 4,5-bisphosphate (4,5-InsP2), but with lower affinity. Acts as a timekeeper/rhythm generator via calcium signaling, affecting the defecation cycle and pharyngeal pumping. Affects normal hermaphrodite and male fertility as a participant in intracellular signaling by acting downstream of let-23/lin-3 which regulates ovulation, spermathecal valve dilation and male mating behavior. Important for early embryonic development; controls epidermal cell migration and may also regulate filopodial protrusive activity during epithelial morphogenesis. Component of inositol trisphosphate (IP3)-mediated downstream signaling pathways that controls amphid sensory neuronal (ASH)-mediated response to nose touch and benzaldehyde but not other ASH-mediated responses. Involved in modulating lifespan, acting downstream of transcription factor atf-6. In Caenorhabditis elegans, this protein is Inositol 1,4,5-trisphosphate receptor itr-1.